A 259-amino-acid polypeptide reads, in one-letter code: Short chain dehydrogenase ausX (259 aa).

I13, D59, R121, Y153, K157, and V186 together coordinate NADP(+). The active-site Proton acceptor is the Y153. Catalysis depends on Y153, which acts as the Proton donor. Residue K157 is the Lowers pKa of active site Tyr of the active site.

Belongs to the short-chain dehydrogenases/reductases (SDR) family.

It functions in the pathway secondary metabolite biosynthesis; terpenoid biosynthesis. Functionally, short chain dehydrogenase; part of the gene cluster A that mediates the biosynthesis of the fungal meroterpenoid acetoxydehydroaustin. The first step of the pathway is the synthesis of 3,5-dimethylorsellinic acid by the polyketide synthase ausA. 3,5-dimethylorsellinic acid is then prenylated by the polyprenyl transferase ausN. Further epoxidation by the FAD-dependent monooxygenase ausM and cyclization by the probable terpene cyclase ausL lead to the formation of protoaustinoid A. Protoaustinoid A is then oxidized to spiro-lactone preaustinoid A3 by the combined action of the FAD-binding monooxygenases ausB and ausC, and the dioxygenase ausE. Acid-catalyzed keto-rearrangement and ring contraction of the tetraketide portion of preaustinoid A3 by ausJ lead to the formation of preaustinoid A4. The aldo-keto reductase ausK, with the help of ausH, is involved in the next step by transforming preaustinoid A4 into isoaustinone which is in turn hydroxylated by the P450 monooxygenase ausI to form austinolide. The cytochrome P450 monooxygenase ausG then modifies austinolide to austinol. Austinol is further acetylated to austin by the O-acetyltransferase ausP, which spontaneously changes to dehydroaustin. The cytochrome P450 monooxygenase then converts dehydroaustin is into 7-dehydrodehydroaustin. The hydroxylation catalyzed by ausR permits the second O-acetyltransferase ausQ to add an additional acetyl group to the molecule, leading to the formation of acetoxydehydroaustin. Due to genetic rearrangements of the clusters and the subsequent loss of some enzymes, the end product of the Penicillium brasilianum austinoid biosynthesis clusters is acetoxydehydroaustin. In Penicillium brasilianum, this protein is Short chain dehydrogenase ausX.